We begin with the raw amino-acid sequence, 188 residues long: Acyl-acyl carrier protein thioesterase ATL2, chloroplastic (188 aa).

Residues 1–47 constitute a chloroplast transit peptide; it reads MFQATSTGAQIMHAAFPRSWRRGHVLPLRSAKIFKPLACLELRGSTG. Residue aspartate 64 is part of the active site.

The protein belongs to the 4-hydroxybenzoyl-CoA thioesterase family. Expressed in endodermal and peridermal cells in young and mature roots, in boundaries of stem lateral organs and developing seeds.

It is found in the plastid. The protein localises to the chloroplast. In terms of biological role, acyl-ACP thioesterase involved in the production of fatty acids and beta-keto fatty acids. Can produce beta-keto fatty acids of medium chain (8:0 and 10:0) and small amounts of 8:0 fatty acid when expressed in a heterologous organism (E.coli). May play a role in suberin biosynthesis. The protein is Acyl-acyl carrier protein thioesterase ATL2, chloroplastic of Arabidopsis thaliana (Mouse-ear cress).